A 54-amino-acid chain; its full sequence is Large ribosomal subunit protein bL33C (54 aa).

Belongs to the bacterial ribosomal protein bL33 family.

In Streptomyces coelicolor (strain ATCC BAA-471 / A3(2) / M145), this protein is Large ribosomal subunit protein bL33C (rpmG3).